Reading from the N-terminus, the 620-residue chain is Apoptosis regulator MC163R (620 aa).

The helical transmembrane segment at 113–133 threads the bilayer; the sequence is APLPLLLLPLLLPPMILLFFL.

The protein resides in the host mitochondrion. The protein localises to the host membrane. Plays a role in the inhibition of host apoptosis. Prevents host TNF-alpha-induced mitochondrial membrane permeabilization and reduces caspase-3/CASP3 and PARP1 cleavage induced by the intrinsic apoptotic pathway. The sequence is that of Apoptosis regulator MC163R (MC163R) from Homo sapiens (Human).